The sequence spans 691 residues: DNA ligase (691 aa).

NAD(+) contacts are provided by residues 41–45 (DAEYD), 90–91 (SL), and Glu-130. Lys-132 (N6-AMP-lysine intermediate) is an active-site residue. Arg-153, Glu-190, Lys-307, and Lys-331 together coordinate NAD(+). 4 residues coordinate Zn(2+): Cys-425, Cys-428, Cys-443, and Cys-449. Positions 610–691 (APQGVLAGKT…MHTLLEGHAR (82 aa)) constitute a BRCT domain.

This sequence belongs to the NAD-dependent DNA ligase family. LigA subfamily. Mg(2+) is required as a cofactor. The cofactor is Mn(2+).

It carries out the reaction NAD(+) + (deoxyribonucleotide)n-3'-hydroxyl + 5'-phospho-(deoxyribonucleotide)m = (deoxyribonucleotide)n+m + AMP + beta-nicotinamide D-nucleotide.. DNA ligase that catalyzes the formation of phosphodiester linkages between 5'-phosphoryl and 3'-hydroxyl groups in double-stranded DNA using NAD as a coenzyme and as the energy source for the reaction. It is essential for DNA replication and repair of damaged DNA. This Burkholderia mallei (strain NCTC 10247) protein is DNA ligase.